A 287-amino-acid chain; its full sequence is Thymidylate synthase (287 aa).

Position 21 (R21) interacts with dUMP. N51 is a binding site for (6R)-5,10-methylene-5,6,7,8-tetrahydrofolate. Residue 150 to 151 participates in dUMP binding; the sequence is RR. C170 serves as the catalytic Nucleophile. Residues 190–193, N201, and 231–233 each bind dUMP; these read RSGD and HIY. (6R)-5,10-methylene-5,6,7,8-tetrahydrofolate is bound at residue D193. Position 286 (A286) interacts with (6R)-5,10-methylene-5,6,7,8-tetrahydrofolate.

This sequence belongs to the thymidylate synthase family. Bacterial-type ThyA subfamily. Homodimer.

Its subcellular location is the cytoplasm. It carries out the reaction dUMP + (6R)-5,10-methylene-5,6,7,8-tetrahydrofolate = 7,8-dihydrofolate + dTMP. Its pathway is pyrimidine metabolism; dTTP biosynthesis. Its function is as follows. Catalyzes the reductive methylation of 2'-deoxyuridine-5'-monophosphate (dUMP) to 2'-deoxythymidine-5'-monophosphate (dTMP) while utilizing 5,10-methylenetetrahydrofolate (mTHF) as the methyl donor and reductant in the reaction, yielding dihydrofolate (DHF) as a by-product. This enzymatic reaction provides an intracellular de novo source of dTMP, an essential precursor for DNA biosynthesis. The sequence is that of Thymidylate synthase from Mycoplasma genitalium (strain ATCC 33530 / DSM 19775 / NCTC 10195 / G37) (Mycoplasmoides genitalium).